The primary structure comprises 605 residues: Dihydrogeodin oxidase (605 aa).

The signal sequence occupies residues 1–18 (MPSLKDWVVAGLVPMTIA). N-linked (GlcNAc...) asparagine glycans are attached at residues asparagine 27, asparagine 107, and asparagine 112. 3 Plastocyanin-like domains span residues 65 to 183 (TVTQ…GPSS), 189 to 347 (DLGP…YDES), and 424 to 567 (YVDW…KIKP). Residues histidine 117, histidine 119, histidine 161, and histidine 163 each contribute to the Cu cation site. Asparagine 278 and asparagine 467 each carry an N-linked (GlcNAc...) asparagine glycan. The Cu cation site is built by histidine 484, histidine 487, histidine 489, histidine 543, cysteine 544, histidine 545, and histidine 549.

It belongs to the multicopper oxidase family. Cu cation is required as a cofactor.

The catalysed reaction is 2 dihydrogeodin + O2 + 2 H(+) = 2 (+)-geodin + 2 H2O. It participates in secondary metabolite biosynthesis. Dihydrogeodin oxidase; part of the gene cluster that mediates the biosynthesis of geodin, an intermediate in the biosynthesis of other natural products. The pathway begins with the synthesis of atrochrysone thioester by the polyketide synthase (PKS) gedC. The atrochrysone carboxyl ACP thioesterase gedB then breaks the thioester bond and releases the atrochrysone carboxylic acid from gedC. The atrochrysone carboxylic acid is then converted to atrochrysone which is further transformed into emodinanthrone. The next step is performed by the emodinanthrone oxygenase gedH that catalyzes the oxidation of emodinanthrone to emodin. Emodin O-methyltransferase encoded probably by gedA then catalyzes methylation of the 8-hydroxy group of emodin to form questin. Ring cleavage of questin by questin oxidase gedK leads to desmethylsulochrin via several intermediates including questin epoxide. Another methylation step probably catalyzed by methyltransferase gedG leads to the formation of sulochrin which is further converted to dihydrogeodin by the sulochrin halogenase gedL. Finally, the dihydrogeodin oxidase gedJ catalyzes the stereospecific phenol oxidative coupling reaction converting dihydrogeodin to geodin. The polypeptide is Dihydrogeodin oxidase (Aspergillus terreus (strain NIH 2624 / FGSC A1156)).